Here is a 206-residue protein sequence, read N- to C-terminus: Homoserine/homoserine lactone efflux protein (206 aa).

Transmembrane regions (helical) follow at residues 5-25, 45-65, 68-88, 117-137, 148-168, and 182-202; these read WWFA…SGAI, GLQT…GTLF, SLLA…WLGI, FVNL…PQFI, LILG…YATL, and MKAL…LLAS.

This sequence belongs to the Rht family.

Its subcellular location is the cell membrane. In terms of biological role, conducts the efflux of homoserine and homoserine lactone. The chain is Homoserine/homoserine lactone efflux protein (rhtB) from Salmonella typhimurium (strain LT2 / SGSC1412 / ATCC 700720).